The sequence spans 1361 residues: Xanthine dehydrogenase 1 (1361 aa).

A 2Fe-2S ferredoxin-type domain is found at 15 to 101; sequence TEALLYVNGV…GMHVISIEGL (87 aa). Residues Cys53, Cys58, Cys61, Cys83, Cys123, Cys126, Cys159, and Cys161 each coordinate [2Fe-2S] cluster. An FAD-binding PCMH-type domain is found at 257-442; sequence RGNGGITWYR…LSVFLPWTRP (186 aa). FAD-binding positions include 285–292, Phe365, 375–379, Asp388, Leu432, and Lys450; these read LLVGNTEV and CIGGN. Gln796 and Phe827 together coordinate Mo-molybdopterin. Substrate contacts are provided by Glu831 and Arg909. Residue Arg941 coordinates Mo-molybdopterin. Substrate contacts are provided by Phe943 and Thr1039. Ala1108 contacts Mo-molybdopterin. Glu1297 acts as the Proton acceptor in catalysis.

It belongs to the xanthine dehydrogenase family. Homodimer. Requires [2Fe-2S] cluster as cofactor. FAD is required as a cofactor. It depends on Mo-molybdopterin as a cofactor. In terms of tissue distribution, expressed in roots, leaves, stems, flowers and siliques.

It catalyses the reaction xanthine + NAD(+) + H2O = urate + NADH + H(+). The enzyme catalyses hypoxanthine + NAD(+) + H2O = xanthine + NADH + H(+). Its function is as follows. Key enzyme involved in purine catabolism. Catalyzes the oxidation of hypoxanthine to xanthine and the oxidation of xanthine to urate. Regulates the level of ureides and plays an important role during plant growth and development, senescence and response to stresses. Possesses NADH oxidase activity and may contribute to the generation of superoxide anions in planta. The sequence is that of Xanthine dehydrogenase 1 (XDH1) from Arabidopsis thaliana (Mouse-ear cress).